A 314-amino-acid polypeptide reads, in one-letter code: Probable manganese-dependent inorganic pyrophosphatase (314 aa).

The Mn(2+) site is built by H10, D14, D16, D80, H102, and D154.

Belongs to the PPase class C family. Requires Mn(2+) as cofactor.

It is found in the cytoplasm. The catalysed reaction is diphosphate + H2O = 2 phosphate + H(+). In Lactococcus lactis subsp. lactis (strain IL1403) (Streptococcus lactis), this protein is Probable manganese-dependent inorganic pyrophosphatase (ppaC).